The following is a 71-amino-acid chain: General transcription factor IIH subunit 5 (71 aa).

A Phosphothreonine modification is found at Thr-69.

This sequence belongs to the TFB5 family. Component of the 7-subunit TFIIH core complex composed of XPB/ERCC3, XPD/ERCC2, GTF2H1, GTF2H2, GTF2H3, GTF2H4 and GTF2H5, which is active in NER. The core complex associates with the 3-subunit CDK-activating kinase (CAK) module composed of CCNH/cyclin H, CDK7 and MNAT1 to form the 10-subunit holoenzyme (holo-TFIIH) active in transcription. Part of TBP-based Pol II pre-initiation complex (PIC), in which Pol II core assembles with general transcription factors and other specific initiation factors including GTF2E1, GTF2E2, GTF2F1, GTF2F2, TCEA1, ERCC2, ERCC3, GTF2H2, GTF2H3, GTF2H4, GTF2H5, GTF2A1, GTF2A2, GTF2B and TBP; this large multi-subunit PIC complex mediates DNA unwinding and targets Pol II core to the transcription start site where the first phosphodiester bond forms.

It localises to the nucleus. The protein localises to the cytoplasm. In terms of biological role, component of the general transcription and DNA repair factor IIH (TFIIH) core complex, which is involved in general and transcription-coupled nucleotide excision repair (NER) of damaged DNA and, when complexed to CAK, in RNA transcription by RNA polymerase II. In NER, TFIIH acts by opening DNA around the lesion to allow the excision of the damaged oligonucleotide and its replacement by a new DNA fragment. In transcription, TFIIH has an essential role in transcription initiation. When the pre-initiation complex (PIC) has been established, TFIIH is required for promoter opening and promoter escape. Phosphorylation of the C-terminal tail (CTD) of the largest subunit of RNA polymerase II by the kinase module CAK controls the initiation of transcription. Necessary for the stability of the TFIIH complex and for the presence of normal levels of TFIIH in the cell. The polypeptide is General transcription factor IIH subunit 5 (Mus musculus (Mouse)).